The sequence spans 160 residues: MMSQLTHINASGEANMVDVSNKADTVREARAEAYVRMAPETLQLILSGQHHKGDVFATARIAGIQAAKRTWELIPLCHPLLLSKVEVQLEALPEQSSVRIESLCKLSGKTGVEMEALTAASVAALTIYDMCKAVQKDIVIENVRLLEKSGGKSGHFKVDA.

Residues 76–78 (LCH) and 114–115 (ME) contribute to the substrate site. The active site involves D129.

This sequence belongs to the MoaC family. Homohexamer; trimer of dimers.

It carries out the reaction (8S)-3',8-cyclo-7,8-dihydroguanosine 5'-triphosphate = cyclic pyranopterin phosphate + diphosphate. The protein operates within cofactor biosynthesis; molybdopterin biosynthesis. Functionally, catalyzes the conversion of (8S)-3',8-cyclo-7,8-dihydroguanosine 5'-triphosphate to cyclic pyranopterin monophosphate (cPMP). The protein is Cyclic pyranopterin monophosphate synthase of Vibrio cholerae serotype O1 (strain ATCC 39541 / Classical Ogawa 395 / O395).